The chain runs to 291 residues: G1/S-specific cyclin-D1 (291 aa).

The residue at position 282 (threonine 282) is a Phosphothreonine.

Belongs to the cyclin family. Cyclin D subfamily. Interacts with the cdk4 and cdk6 protein kinases to form a serine/threonine kinase holoenzyme complex. The cyclin subunit imparts substrate specificity to the complex. In terms of processing, phosphorylation at Thr-282 by MAP kinases is required for ubiquitination and degradation by the DCX(AMBRA1) complex. Post-translationally, ubiquitinated by the DCX(AMBRA1) complex during the transition from G1 to S cell phase, leading to its degradation. The DCX(AMBRA1) complex represents the major regulator of CCND1 stability during the G1/S transition.

It is found in the nucleus. Its subcellular location is the cytoplasm. In terms of biological role, regulatory component of the cyclin D1-CDK4 (DC) complex that phosphorylates and inhibits members of the retinoblastoma (RB) protein family including RB1 and regulates the cell-cycle during G(1)/S transition. Phosphorylation of RB1 allows dissociation of the transcription factor E2F from the RB/E2F complex and the subsequent transcription of E2F target genes which are responsible for the progression through the G(1) phase. Hypophosphorylates RB1 in early G(1) phase. Cyclin D-CDK4 complexes are major integrators of various mitogenenic and antimitogenic signals. This Xenopus laevis (African clawed frog) protein is G1/S-specific cyclin-D1 (ccnd1).